Here is a 533-residue protein sequence, read N- to C-terminus: CTP synthase (533 aa).

The interval 1–269 is amidoligase domain; that stretch reads MKKNLKILVI…HEILSSKLNI (269 aa). Ser-16 contributes to the CTP binding site. Ser-16 is a binding site for UTP. Residues 17–22 and Asp-73 each bind ATP; that span reads GIGKGV. Mg(2+) is bound by residues Asp-73 and Glu-143. CTP contacts are provided by residues 150–152, 190–195, and Lys-226; these read DME and KSKPTQ. UTP contacts are provided by residues 190–195 and Lys-226; that span reads KSKPTQ. The Glutamine amidotransferase type-1 domain occupies 304–533; the sequence is YAELDDSYAS…LFLGLIKACI (230 aa). Gly-355 serves as a coordination point for L-glutamine. The active-site Nucleophile; for glutamine hydrolysis is Cys-382. Residues 383–386, Glu-406, and Arg-466 each bind L-glutamine; that span reads LGLQ. Residues His-511 and Glu-513 contribute to the active site.

Belongs to the CTP synthase family. Homotetramer.

It carries out the reaction UTP + L-glutamine + ATP + H2O = CTP + L-glutamate + ADP + phosphate + 2 H(+). The enzyme catalyses L-glutamine + H2O = L-glutamate + NH4(+). It catalyses the reaction UTP + NH4(+) + ATP = CTP + ADP + phosphate + 2 H(+). The protein operates within pyrimidine metabolism; CTP biosynthesis via de novo pathway; CTP from UDP: step 2/2. Allosterically activated by GTP, when glutamine is the substrate; GTP has no effect on the reaction when ammonia is the substrate. The allosteric effector GTP functions by stabilizing the protein conformation that binds the tetrahedral intermediate(s) formed during glutamine hydrolysis. Inhibited by the product CTP, via allosteric rather than competitive inhibition. In terms of biological role, catalyzes the ATP-dependent amination of UTP to CTP with either L-glutamine or ammonia as the source of nitrogen. Regulates intracellular CTP levels through interactions with the four ribonucleotide triphosphates. This Borreliella afzelii (strain PKo) (Borrelia afzelii) protein is CTP synthase.